The chain runs to 97 residues: MKPTMLLMITVFLIFPALSQAESPFSSLQSAKEKTTVLQDLRKICTPQASLSDEAWEKLMLSDENNKQHIREAIVAMERNNQSNYWEALGKVECPDM.

This is an uncharacterized protein from Escherichia coli O157:H7.